The following is a 600-amino-acid chain: uncharacterized protein (600 aa).

4Fe-4S ferredoxin-type domains are found at residues R14–K44 and G53–L82. 2 ABC transporter domains span residues I77–G318 and L348–M563. Residues G117–S124 and G380–T387 each bind ATP. A compositionally biased stretch (basic and acidic residues) spans R569 to E594. A disordered region spans residues R569–E600.

The protein belongs to the ABC transporter superfamily.

This is an uncharacterized protein from Methanocaldococcus jannaschii (strain ATCC 43067 / DSM 2661 / JAL-1 / JCM 10045 / NBRC 100440) (Methanococcus jannaschii).